The primary structure comprises 389 residues: MVGWSGNPLFDLFKLPEEHNELRATIRALAEKEIAPHAADVDQRARFPEEALAALNASGFNAIHVPEEYGGQGADSVAACIVIEEVARVDASASLIPAVNKLGTMGLILRGSEELKKQVLPSLAAEGAMASYALSEREAGSDAASMRTRAKADGDDWILNGFKCWITNGGKSTWYTVMAVTDPDKGANGISAFIVHKDDEGFSIGPKEKKLGIKGSPTTELYFDKCRIPGDRIIGEPGTGFKTALATLDHTRPTIGAQAVGIAQGALDAAIVYTKDRKQFGESISTFQSIQFMLADMAMKVEAARLIVYAAAARAERGEPDLGFISAASKCFASDIAMEVTTDAVQLFGGAGYTSDFPVERFMRDAKITQIYEGTNQIQRVVMSRALLR.

The protein belongs to the acyl-CoA dehydrogenase family. Requires FAD as cofactor.

It carries out the reaction a 2,3-saturated acyl-CoA + A = a 2,3-dehydroacyl-CoA + AH2. The polypeptide is Probable acyl-CoA dehydrogenase fadE25 (fadE25) (Mycobacterium leprae (strain TN)).